The chain runs to 64 residues: Large ribosomal subunit protein bL35 (64 aa).

Residues 1–14 (MKNKTHKGTAKRVK) are compositionally biased toward basic residues. The interval 1–30 (MKNKTHKGTAKRVKVTGSGKLVREQANRRH) is disordered. Residues 21 to 30 (LVREQANRRH) show a composition bias toward basic and acidic residues.

Belongs to the bacterial ribosomal protein bL35 family.

The protein is Large ribosomal subunit protein bL35 of Corynebacterium efficiens (strain DSM 44549 / YS-314 / AJ 12310 / JCM 11189 / NBRC 100395).